Here is a 380-residue protein sequence, read N- to C-terminus: DNA primase small subunit PriS (380 aa).

Active-site residues include D103, D105, and D284.

The protein belongs to the eukaryotic-type primase small subunit family. As to quaternary structure, heterodimer of a small subunit (PriS) and a large subunit (PriL). Requires Mg(2+) as cofactor. The cofactor is Mn(2+).

Functionally, catalytic subunit of DNA primase, an RNA polymerase that catalyzes the synthesis of short RNA molecules used as primers for DNA polymerase during DNA replication. The small subunit contains the primase catalytic core and has DNA synthesis activity on its own. Binding to the large subunit stabilizes and modulates the activity, increasing the rate of DNA synthesis while decreasing the length of the DNA fragments, and conferring RNA synthesis capability. The DNA polymerase activity may enable DNA primase to also catalyze primer extension after primer synthesis. May also play a role in DNA repair. This chain is DNA primase small subunit PriS, found in Methanocorpusculum labreanum (strain ATCC 43576 / DSM 4855 / Z).